The chain runs to 213 residues: ATP phosphoribosyltransferase (213 aa).

The protein belongs to the ATP phosphoribosyltransferase family. Short subfamily. As to quaternary structure, heteromultimer composed of HisG and HisZ subunits.

Its subcellular location is the cytoplasm. It catalyses the reaction 1-(5-phospho-beta-D-ribosyl)-ATP + diphosphate = 5-phospho-alpha-D-ribose 1-diphosphate + ATP. The protein operates within amino-acid biosynthesis; L-histidine biosynthesis; L-histidine from 5-phospho-alpha-D-ribose 1-diphosphate: step 1/9. Its function is as follows. Catalyzes the condensation of ATP and 5-phosphoribose 1-diphosphate to form N'-(5'-phosphoribosyl)-ATP (PR-ATP). Has a crucial role in the pathway because the rate of histidine biosynthesis seems to be controlled primarily by regulation of HisG enzymatic activity. The polypeptide is ATP phosphoribosyltransferase (Methylococcus capsulatus (strain ATCC 33009 / NCIMB 11132 / Bath)).